An 816-amino-acid polypeptide reads, in one-letter code: Lon protease (816 aa).

A Lon N-terminal domain is found at 27 to 221 (LPLLPIRDVV…KVNDLLAREH (195 aa)). 372-379 (GPPGVGKT) is an ATP binding site. A Lon proteolytic domain is found at 608–789 (KNEVGVVNGL…DEVLKLALEK (182 aa)). Catalysis depends on residues Ser695 and Lys738. A disordered region spans residues 795 to 816 (PKGKAKPATPKVVVRPSKEISA). Low complexity predominate over residues 800 to 809 (KPATPKVVVR).

The protein belongs to the peptidase S16 family. In terms of assembly, homohexamer. Organized in a ring with a central cavity.

It localises to the cytoplasm. It catalyses the reaction Hydrolysis of proteins in presence of ATP.. In terms of biological role, ATP-dependent serine protease that mediates the selective degradation of mutant and abnormal proteins as well as certain short-lived regulatory proteins. Required for cellular homeostasis and for survival from DNA damage and developmental changes induced by stress. Degrades polypeptides processively to yield small peptide fragments that are 5 to 10 amino acids long. Binds to DNA in a double-stranded, site-specific manner. The chain is Lon protease from Trichlorobacter lovleyi (strain ATCC BAA-1151 / DSM 17278 / SZ) (Geobacter lovleyi).